A 258-amino-acid polypeptide reads, in one-letter code: Aspartate/glutamate leucyltransferase (258 aa).

Belongs to the R-transferase family. Bpt subfamily.

It is found in the cytoplasm. It catalyses the reaction N-terminal L-glutamyl-[protein] + L-leucyl-tRNA(Leu) = N-terminal L-leucyl-L-glutamyl-[protein] + tRNA(Leu) + H(+). It carries out the reaction N-terminal L-aspartyl-[protein] + L-leucyl-tRNA(Leu) = N-terminal L-leucyl-L-aspartyl-[protein] + tRNA(Leu) + H(+). Functions in the N-end rule pathway of protein degradation where it conjugates Leu from its aminoacyl-tRNA to the N-termini of proteins containing an N-terminal aspartate or glutamate. The protein is Aspartate/glutamate leucyltransferase of Rhizobium leguminosarum bv. trifolii (strain WSM2304).